Here is a 207-residue protein sequence, read N- to C-terminus: MAQGTLYIVSAPSGAGKSSLIQALLKTQPLYDTQVSVSHTTRQPRPGEVHGEHYFFVNHDEFKEMISRDAFLEHAEVFGNYYGTSREAIEQVLATGVDVFLDIDWQGAQQIRQKMPHARSIFILPPSKIELDRRLRGRDQDSEEVIAKRMAQAVAEMSHYAEYDYLIVNDDFDTALTDLKTIIRAERLRMSRQKQRHDALISKLLAD.

The 181-residue stretch at 4 to 184 (GTLYIVSAPS…ALTDLKTIIR (181 aa)) folds into the Guanylate kinase-like domain. 11 to 18 (APSGAGKS) is a binding site for ATP.

The protein belongs to the guanylate kinase family.

It is found in the cytoplasm. The enzyme catalyses GMP + ATP = GDP + ADP. Essential for recycling GMP and indirectly, cGMP. The protein is Guanylate kinase of Escherichia coli O157:H7.